Consider the following 82-residue polypeptide: Sulfur carrier protein TusA (82 aa).

The active-site Cysteine persulfide intermediate is the C19.

Belongs to the sulfur carrier protein TusA family.

The protein localises to the cytoplasm. Functionally, sulfur carrier protein which probably makes part of a sulfur-relay system. The protein is Sulfur carrier protein TusA of Vibrio parahaemolyticus serotype O3:K6 (strain RIMD 2210633).